The primary structure comprises 327 residues: MIKIGNIELSSNVILAPMSDVTDLEFRKLVKRFGAGLVVSEMIASRAMIMKSRQSMQKCAIMHDDPTSACVQLAGCEPDVIAEAAKMNEDMGAKIIDLNFGCPAKKVVGGYAGSALMRDEQLAAKIFEATVKAVKIPVTVKMRIGWDDNTRNAPTLAKIAANSGVQMVTVHGRTRCQFYSGNANWDFIRTVKEAVKIPVIANGDITNFAKAKEALQRSGADGIMVGRGVYGKPWLISQIAYYLKTGKEKPAPSIAEQLDIITKHYDAIIDYYGKSVGVPIARKHIIWYSNGLPSSAEFRCTVNLMKDPIAVKEKIAEFYMSVMDANK.

FMN is bound by residues 17 to 19 (PMS) and Q72. Residue C102 is the Proton donor of the active site. Residues K141, 202 to 204 (NGD), and 226 to 227 (GR) contribute to the FMN site.

The protein belongs to the Dus family. FMN is required as a cofactor.

The catalysed reaction is a 5,6-dihydrouridine in tRNA + NAD(+) = a uridine in tRNA + NADH + H(+). It carries out the reaction a 5,6-dihydrouridine in tRNA + NADP(+) = a uridine in tRNA + NADPH + H(+). In terms of biological role, catalyzes the synthesis of 5,6-dihydrouridine (D), a modified base found in the D-loop of most tRNAs, via the reduction of the C5-C6 double bond in target uridines. This Rickettsia prowazekii (strain Madrid E) protein is Probable tRNA-dihydrouridine synthase (dus).